We begin with the raw amino-acid sequence, 260 residues long: Triosephosphate isomerase (260 aa).

Residue 11-13 (NWK) coordinates substrate. The active-site Electrophile is H103. The active-site Proton acceptor is E175. Substrate-binding positions include G181, S220, and 241–242 (GG).

Belongs to the triosephosphate isomerase family. As to quaternary structure, homodimer.

The protein resides in the cytoplasm. It carries out the reaction D-glyceraldehyde 3-phosphate = dihydroxyacetone phosphate. Its pathway is carbohydrate biosynthesis; gluconeogenesis. It functions in the pathway carbohydrate degradation; glycolysis; D-glyceraldehyde 3-phosphate from glycerone phosphate: step 1/1. Its function is as follows. Involved in the gluconeogenesis. Catalyzes stereospecifically the conversion of dihydroxyacetone phosphate (DHAP) to D-glyceraldehyde-3-phosphate (G3P). This Shewanella amazonensis (strain ATCC BAA-1098 / SB2B) protein is Triosephosphate isomerase.